The primary structure comprises 1363 residues: Vascular endothelial growth factor receptor 3 (1363 aa).

Positions 1–24 are cleaved as a signal peptide; that stretch reads MQRGAALCLRLWLCLGLLDGLVSG. The Extracellular portion of the chain corresponds to 25–775; the sequence is YSMTPPTLNI…EGSEDKGSME (751 aa). Ig-like C2-type domains are found at residues 30–127, 151–213, 219–326, 331–415, 422–552, 555–671, and 678–764; these read PTLN…TAAS, KDAM…WGDQ, PFLV…TEVI, PFIS…ISLE, PQIH…FYVT, PDGF…KYLS, and PRLT…ASVA. Residues N33, N104, N166, N251, N299, and N411 are each glycosylated (N-linked (GlcNAc...) asparagine). Disulfide bonds link C51–C111 and C158–C206. A disulfide bond links C252 and C310. 3 disulfide bridges follow: C445/C534, C466/C486, and C578/C653. 5 N-linked (GlcNAc...) asparagine glycosylation sites follow: N515, N527, N594, N683, and N690. Cysteines 699 and 751 form a disulfide. N-linked (GlcNAc...) asparagine glycosylation occurs at N758. The chain crosses the membrane as a helical span at residues 776–796; that stretch reads IVILVGTGVIAVFFWVLLLLI. Over 797-1363 the chain is Cytoplasmic; sequence FCNMRRPAHA…RVTFFTDNSY (567 aa). Residues Y830, Y833, and Y853 each carry the phosphotyrosine; by SRC modification. Residues 845–1173 enclose the Protein kinase domain; sequence LHLGRVLGYG…ELVEILGDLL (329 aa). Residues 851–859 and K879 contribute to the ATP site; that span reads LGYGAFGKV. Catalysis depends on D1037, which acts as the Proton acceptor. Phosphotyrosine; by autocatalysis and SRC is present on Y1063. 4 positions are modified to phosphotyrosine; by autocatalysis: Y1068, Y1230, Y1231, and Y1265. Residues 1291–1331 form a disordered region; it reads HRQESGFSCKGPGQNVAVTRAHPDSQGRRRRPERGARGGQV. A phosphotyrosine; by autocatalysis and SRC mark is found at Y1333 and Y1337. Position 1363 is a phosphotyrosine; by autocatalysis (Y1363).

It belongs to the protein kinase superfamily. Tyr protein kinase family. CSF-1/PDGF receptor subfamily. In terms of assembly, interacts with VEGFC and VEGFD. Monomer in the absence of bound VEGFC or VEGFD. Homodimer in the presence of bound VEGFC or VEGFD. Can also form a heterodimer with KDR. Interacts with PTPN14; the interaction is enhanced by stimulation with VEGFC. Interacts with CRK, GRB2, PTK2/FAK1, SHC1, PIK3R1 and PTPN11/SHP-2. Identified in a complex with SRC and ITGB1. Autophosphorylated on tyrosine residues upon ligand binding. Autophosphorylation occurs in trans, i.e. one subunit of the dimeric receptor phosphorylates tyrosine residues on the other subunit. Phosphorylation in response to H(2)O(2) is mediated by a process that requires SRC and PRKCD activity. Phosphorylation at Tyr-1068 is required for autophosphorylation at additional tyrosine residues. Phosphorylation at Tyr-1063 and Tyr-1337 is important for interaction with CRK and subsequent activation of MAPK8. Phosphorylation at Tyr-1230, Tyr-1231 and Tyr-1337 is important for interaction with GRB2 and subsequent activation of the AKT1 and MAPK1/ERK2 and/or MAPK3/ERK1 signaling pathways. In response to endothelial cell adhesion onto collagen, can also be phosphorylated in the absence of FLT4 kinase activity by SRC at Tyr-830, Tyr-833, Tyr-853, Tyr-1063, Tyr-1333, and Tyr-1337. In terms of tissue distribution, detected in endothelial cells (at protein level). Widely expressed. Detected in fetal spleen, lung and brain. Detected in adult liver, muscle, thymus, placenta, lung, testis, ovary, prostate, heart, and kidney.

Its subcellular location is the cell membrane. The protein resides in the cytoplasm. It localises to the nucleus. It is found in the secreted. The catalysed reaction is L-tyrosyl-[protein] + ATP = O-phospho-L-tyrosyl-[protein] + ADP + H(+). With respect to regulation, present in an inactive conformation in the absence of bound ligand. Binding of VEGFC or VEGFD leads to dimerization and activation by autophosphorylation on tyrosine residues. Inhibited by MAZ51. Functionally, tyrosine-protein kinase that acts as a cell-surface receptor for VEGFC and VEGFD, and plays an essential role in adult lymphangiogenesis and in the development of the vascular network and the cardiovascular system during embryonic development. Promotes proliferation, survival and migration of endothelial cells, and regulates angiogenic sprouting. Signaling by activated FLT4 leads to enhanced production of VEGFC, and to a lesser degree VEGFA, thereby creating a positive feedback loop that enhances FLT4 signaling. Modulates KDR signaling by forming heterodimers. The secreted isoform 3 may function as a decoy receptor for VEGFC and/or VEGFD and play an important role as a negative regulator of VEGFC-mediated lymphangiogenesis and angiogenesis. Binding of vascular growth factors to isoform 1 or isoform 2 leads to the activation of several signaling cascades; isoform 2 seems to be less efficient in signal transduction, because it has a truncated C-terminus and therefore lacks several phosphorylation sites. Mediates activation of the MAPK1/ERK2, MAPK3/ERK1 signaling pathway, of MAPK8 and the JUN signaling pathway, and of the AKT1 signaling pathway. Phosphorylates SHC1. Mediates phosphorylation of PIK3R1, the regulatory subunit of phosphatidylinositol 3-kinase. Promotes phosphorylation of MAPK8 at 'Thr-183' and 'Tyr-185', and of AKT1 at 'Ser-473'. The sequence is that of Vascular endothelial growth factor receptor 3 (FLT4) from Homo sapiens (Human).